Consider the following 146-residue polypeptide: Snaclec 5 (146 aa).

An N-terminal signal peptide occupies residues 1–23 (MGRFIFISFGLLVVFLSLSGTEA). 3 disulfides stabilise this stretch: C25-C36, C53-C142, and C119-C134. Positions 32 to 143 (YEGHCYRVFD…CRNYGHFVCK (112 aa)) constitute a C-type lectin domain.

The protein belongs to the snaclec family. As to quaternary structure, heterodimer; disulfide-linked. Expressed by the venom gland.

Its subcellular location is the secreted. In terms of biological role, interferes with one step of hemostasis (modulation of platelet aggregation, or coagulation cascade, for example). The sequence is that of Snaclec 5 from Echis pyramidum leakeyi (Leakey's carpet viper).